The following is a 454-amino-acid chain: Kynurenine--oxoglutarate transaminase 3 (454 aa).

An N-acetylserine modification is found at Phe2. Residue Gly71 participates in substrate binding. The residue at position 116 (Lys116) is an N6-acetyllysine; alternate. The residue at position 116 (Lys116) is an N6-succinyllysine; alternate. Position 218 (Asn218) interacts with substrate. Lys280 carries the N6-(pyridoxal phosphate)lysine modification. Arg429 contacts substrate.

The protein belongs to the class-I pyridoxal-phosphate-dependent aminotransferase family. Homodimer. The cofactor is pyridoxal 5'-phosphate.

It carries out the reaction L-kynurenine + 2-oxoglutarate = kynurenate + L-glutamate + H2O. The enzyme catalyses L-kynurenine + glyoxylate = kynurenate + glycine + H2O. It catalyses the reaction 3-hydroxy-L-kynurenine + glyoxylate = xanthurenate + glycine + H2O. The catalysed reaction is an S-substituted L-cysteine + H2O = a thiol + pyruvate + NH4(+). Its pathway is amino-acid degradation; L-kynurenine degradation; kynurenate from L-kynurenine: step 1/2. In terms of biological role, catalyzes the irreversible transamination of the L-tryptophan metabolite L-kynurenine to form kynurenic acid (KA), an intermediate in the tryptophan catabolic pathway which is also a broad spectrum antagonist of the three ionotropic excitatory amino acid receptors among others. May catalyze the beta-elimination of S-conjugates and Se-conjugates of L-(seleno)cysteine, resulting in the cleavage of the C-S or C-Se bond. Has transaminase activity towards L-kynurenine, tryptophan, phenylalanine, serine, cysteine, methionine, histidine, glutamine and asparagine with glyoxylate as an amino group acceptor (in vitro). Has lower activity with 2-oxoglutarate as amino group acceptor (in vitro). In Homo sapiens (Human), this protein is Kynurenine--oxoglutarate transaminase 3.